A 900-amino-acid polypeptide reads, in one-letter code: Phosphoenolpyruvate carboxylase (900 aa).

Catalysis depends on residues histidine 140 and lysine 568.

The protein belongs to the PEPCase type 1 family. It depends on Mg(2+) as a cofactor.

It carries out the reaction oxaloacetate + phosphate = phosphoenolpyruvate + hydrogencarbonate. Its function is as follows. Forms oxaloacetate, a four-carbon dicarboxylic acid source for the tricarboxylic acid cycle. This chain is Phosphoenolpyruvate carboxylase, found in Neisseria gonorrhoeae (strain ATCC 700825 / FA 1090).